A 265-amino-acid polypeptide reads, in one-letter code: Probable esterase tazC (265 aa).

Active-site charge relay system residues include Ser119, Asp209, and His236.

It belongs to the LovG family.

It functions in the pathway secondary metabolite biosynthesis. In terms of biological role, probable esterase; part of the gene cluster that mediates the biosynthesis of azaterrilone A and other azaphilones, a class of fungal metabolites characterized by a highly oxygenated pyrano-quinone bicyclic core and exhibiting a broad range of bioactivities. The first step of the pathway begins with the non-reducing polyketide synthase tazA that assembles one acetyl-CoA starter unit, five malonyl-CoA units, and catalyzes a series of Claisen condensations, methylation, PT-mediated cyclization, and finally releases the first hexaketide precursor through the R-domain. The tazA product then undergoes reduction on its terminal ketone and the following pyran-ring formation by yet undetermined enzyme(s). Dehydration and enoyl reduction, possibly involving the trans-enoyl reductase tazE leads to the next intermediate. TazD is predicted as an acetyltransferase and might catalyze the acetylation steps leading to the synthesis of azaterrilone A. Azaterrilone A is not the final product of the taz pathway and both the highly reducing polyketide synthase tazB and the dual enzyme tazHJ catalyze late steps of the pathway, leading to the production of the 2 final stereoisomers that contain additional polyketide modification whose structures have still to be determined. The polypeptide is Probable esterase tazC (Aspergillus terreus (strain NIH 2624 / FGSC A1156)).